The chain runs to 479 residues: Ribosomal RNA small subunit methyltransferase F (479 aa).

Residues 125 to 131 (AAAPGSK), E149, D176, and D194 each bind S-adenosyl-L-methionine. The Nucleophile role is filled by C247.

This sequence belongs to the class I-like SAM-binding methyltransferase superfamily. RsmB/NOP family.

It is found in the cytoplasm. It catalyses the reaction cytidine(1407) in 16S rRNA + S-adenosyl-L-methionine = 5-methylcytidine(1407) in 16S rRNA + S-adenosyl-L-homocysteine + H(+). Specifically methylates the cytosine at position 1407 (m5C1407) of 16S rRNA. The polypeptide is Ribosomal RNA small subunit methyltransferase F (Escherichia coli (strain SMS-3-5 / SECEC)).